The sequence spans 402 residues: MSSVSQARSLGKYFLLIDNMLVVLGFFVVFPLISIRFVDSLGWAALMVGIALGLRQLVQQGLGIFGGAIADRLGARPMIVTGMLLRAAGFATMAVAHEPWVLWLSCVLSGLGGTLFDPPRSALVVKLVRPQERGRFFSLLMMQDSAGAVTGALIGSWLLQYDFRLVCGVGALLFVLCAGFNAWLLPDWKLSTVRTPLREGMGRVLRDRRFVTYVLTLTGYYMLAVQVMLMLPVMVNDIAGEPAAVKWMYAIEAVLSLTLLYPLARWSEKRFRLEQRLMAGLLVMTFSLVPIGLASNLQQLFTLICLFYIGSIIAEPARETLSASLADARARGSYMGFSRLGLAFGGALGYAGGGWLFDAGRALHTPELPWAMLGVIGVGTFLMLWWQFSQKRLAPGLLEQES.

Helical transmembrane passes span 13–33, 34–54, 99–116, 139–159, 165–185, 214–234, 243–263, 277–297, 300–320, 340–360, and 368–388; these read YFLL…FPLI, SIRF…ALGL, PWVL…GTLF, LLMM…SWLL, LVCG…AWLL, VLTL…LPVM, AAVK…LYPL, LMAG…ASNL, LFTL…ARET, LGLA…FDAG, and LPWA…WWQF.

Belongs to the major facilitator superfamily. DHA1 family. MdtH (TC 2.A.1.2.21) subfamily.

The protein localises to the cell inner membrane. The chain is Multidrug resistance protein MdtH from Cronobacter sakazakii (strain ATCC BAA-894) (Enterobacter sakazakii).